The following is a 304-amino-acid chain: DnaJ homolog subfamily C member 17 (304 aa).

The region spanning 11–76 (DLYALLGIEE…AARAAYDKVR (66 aa)) is the J domain. A compositionally biased stretch (basic and acidic residues) spans 79-106 (KKQAAERTQKLDEKRKKVKLDLEARERQ). The segment at 79-145 (KKQAAERTQK…SRQLEEQQRL (67 aa)) is disordered. A Phosphoserine modification is found at serine 112. A compositionally biased stretch (basic and acidic residues) spans 118-145 (SRSTRTLEQEIERLREEGSRQLEEQQRL). The RRM domain occupies 178-249 (KCKKEDESKG…NPLKISWLEG (72 aa)). At lysine 264 the chain carries N6-methyllysine.

It is found in the cytoplasm. Its subcellular location is the nucleus. Its function is as follows. May negatively affect PAX8-induced thyroglobulin/TG transcription. In Homo sapiens (Human), this protein is DnaJ homolog subfamily C member 17 (DNAJC17).